A 316-amino-acid chain; its full sequence is CRISPR-associated endonuclease Cas1 (316 aa).

Residues glutamate 143, histidine 206, and glutamate 221 each contribute to the Mn(2+) site.

It belongs to the CRISPR-associated endonuclease Cas1 family. In terms of assembly, homodimer, forms a heterotetramer with a Cas2 homodimer. Mg(2+) is required as a cofactor. Mn(2+) serves as cofactor.

Its function is as follows. CRISPR (clustered regularly interspaced short palindromic repeat), is an adaptive immune system that provides protection against mobile genetic elements (viruses, transposable elements and conjugative plasmids). CRISPR clusters contain spacers, sequences complementary to antecedent mobile elements, and target invading nucleic acids. CRISPR clusters are transcribed and processed into CRISPR RNA (crRNA). Acts as a dsDNA endonuclease. Involved in the integration of spacer DNA into the CRISPR cassette. The polypeptide is CRISPR-associated endonuclease Cas1 (Aquifex aeolicus (strain VF5)).